Consider the following 532-residue polypeptide: Hepatocyte nuclear factor 1-beta-B (532 aa).

The interval 1-35 is dimerization; that stretch reads MFTDMVSKLTSLQQELLSALLDSGVTKDVLVQALE. The HNF-p1 domain maps to 5–36; it reads MVSKLTSLQQELLSALLDSGVTKDVLVQALED. The tract at residues 74–95 is disordered; sequence TGAQGKGGKLSGDEGSEDGDDF. The region spanning 102-197 is the POU-specific atypical domain; the sequence is RELQSLNTEE…IDRQFDRVQG (96 aa). A compositionally biased stretch (gly residues) spans 222-231; the sequence is SSGAAGGSGA. Disordered regions lie at residues 222-245 and 500-532; these read SSGA…KRMR and EAGQ…LQAW. A DNA-binding region (homeobox; HNF1-type) is located at residues 244–324; that stretch reads MRRNRFKWGP…NRRKEEAFRQ (81 aa). Positions 505–532 are enriched in polar residues; the sequence is SHPSRYSTMDSSTITHLGSSKQCPLQAW.

The protein belongs to the HNF1 homeobox family. Binds DNA as a dimer. Can form homodimer or heterodimer with HNF1-alpha. In terms of tissue distribution, first expressed at stage 10 in the intermediate mesoderm. Expressed in rhombomere r5 by 14 hpf with expression diminishing by 18 hpf.

It is found in the nucleus. Functionally, transcription factor that binds to the inverted palindrome 5'-GTTAATNATTAAC-3'. Acts downstream of hnf1ba but is not required for induction of rhombomere r5/r6 gene expression in the hindbrain. The protein is Hepatocyte nuclear factor 1-beta-B of Danio rerio (Zebrafish).